A 376-amino-acid chain; its full sequence is Alanine racemase (376 aa).

Residue Lys40 is the Proton acceptor; specific for D-alanine of the active site. The residue at position 40 (Lys40) is an N6-(pyridoxal phosphate)lysine. Arg138 is a binding site for substrate. Tyr270 serves as the catalytic Proton acceptor; specific for L-alanine. Position 317 (Met317) interacts with substrate.

The protein belongs to the alanine racemase family. Pyridoxal 5'-phosphate is required as a cofactor.

The catalysed reaction is L-alanine = D-alanine. The protein operates within amino-acid biosynthesis; D-alanine biosynthesis; D-alanine from L-alanine: step 1/1. Its function is as follows. Catalyzes the interconversion of L-alanine and D-alanine. May also act on other amino acids. The chain is Alanine racemase (alr) from Lactobacillus delbrueckii subsp. bulgaricus (strain ATCC BAA-365 / Lb-18).